The chain runs to 1732 residues: Serine/threonine-protein kinase MRCK alpha (1732 aa).

The Protein kinase domain maps to 77 to 343; the sequence is FEILKVIGRG…IEDFKKHPFF (267 aa). ATP contacts are provided by residues 83 to 91 and K106; that span reads IGRGAFGEV. D201 serves as the catalytic Proton acceptor. 2 positions are modified to phosphoserine; by autocatalysis: S222 and S234. T240 is subject to Phosphothreonine; by autocatalysis. The region spanning 344 to 414 is the AGC-kinase C-terminal domain; sequence SGIDWDNIRN…TSSCVLSDRS (71 aa). Coiled-coil stretches lie at residues 437–670, 713–820, and 880–943; these read NNLA…KQKQ, SEIK…WEAQ, and LELQ…SEKG. The interval 973–1002 is disordered; that stretch reads CTPAGKGRRIADSAPLPVHTPTLRKKGCPA. A Phorbol-ester/DAG-type zinc finger spans residues 1012–1062; sequence THQFFVKSFTAPTKCHQCTSLMVGLIRQGCSCEVCGFSCHITCVNKAPTTC. The 120-residue stretch at 1082–1201 folds into the PH domain; it reads GTAYEGHVRI…WVGVLSELHK (120 aa). The residue at position 1127 (S1127) is a Phosphoserine. Residues 1227-1499 enclose the CNH domain; sequence IKTTQAAAII…RPLNTEGSLN (273 aa). Residue S1545 is modified to Phosphoserine. Positions 1571–1584 constitute a CRIB domain; sequence ISNPTNFNHIAHMG. The interval 1592–1732 is disordered; the sequence is LKDLPMNPRP…ESTDRGSWDP (141 aa). Residues 1604-1619 show a composition bias toward polar residues; it reads SRTVFSGSVSIPSITK. S1611, S1613, S1629, S1651, S1664, S1669, S1693, S1719, and S1721 each carry phosphoserine. Low complexity predominate over residues 1625-1640; the sequence is GRSMSASSGLSARSSA. Residues 1665 to 1674 show a composition bias toward low complexity; sequence PSEGSLSSGG.

The protein belongs to the protein kinase superfamily. AGC Ser/Thr protein kinase family. DMPK subfamily. In terms of assembly, homodimer and homotetramer via the coiled coil regions. Interacts tightly with GTP-bound but not GDP-bound CDC42. Forms a tripartite complex with MYO18A and LURAP1 with the latter acting as an adapter connecting CDC42BPA and MYO18A. LURAP1 binding results in activation of CDC42BPA by abolition of its negative autoregulation. Interacts with LURAP1. Interacts (via AGC-kinase C-terminal domain) with FAM89B/LRAP25 (via LRR repeat). Forms a tripartite complex with FAM89B/LRAP25 and LIMK1. The cofactor is Mg(2+). Post-translationally, proteolytically cleaved by caspases upon apoptosis induction. The cleavage at Asp-478 by CASP3 increases its kinase activity (in vitro). In terms of tissue distribution, highly expressed in the brain and lung and present in lower levels in all other tissues tested.

The protein resides in the cytoplasm. Its subcellular location is the cell projection. It is found in the lamellipodium. It catalyses the reaction L-seryl-[protein] + ATP = O-phospho-L-seryl-[protein] + ADP + H(+). The catalysed reaction is L-threonyl-[protein] + ATP = O-phospho-L-threonyl-[protein] + ADP + H(+). With respect to regulation, maintained in an inactive, closed conformation by an interaction between the kinase domain and the negative autoregulatory C-terminal coiled-coil region. Agonist binding to the phorbol ester binding site disrupts this, releasing the kinase domain to allow N-terminus-mediated dimerization and kinase activation by transautophosphorylation. Inhibited by chelerythrine chloride. Functionally, serine/threonine-protein kinase which is an important downstream effector of CDC42 and plays a role in the regulation of cytoskeleton reorganization and cell migration. Regulates actin cytoskeletal reorganization via phosphorylation of PPP1R12A and MYL9/MLC2. In concert with MYO18A and LURAP1, is involved in modulating lamellar actomyosin retrograde flow that is crucial to cell protrusion and migration. Phosphorylates: PPP1R12C, LIMK1 and LIMK2. May play a role in TFRC-mediated iron uptake. In concert with FAM89B/LRAP25 mediates the targeting of LIMK1 to the lamellipodium resulting in its activation and subsequent phosphorylation of CFL1 which is important for lamellipodial F-actin regulation. Triggers the formation of an extrusion apical actin ring required for epithelial extrusion of apoptotic cells. This Rattus norvegicus (Rat) protein is Serine/threonine-protein kinase MRCK alpha.